We begin with the raw amino-acid sequence, 420 residues long: Protein disulfide isomerase CRELD1 (420 aa).

Positions M1–V29 are cleaved as a signal peptide. The Extracellular portion of the chain corresponds to Q30–E362. Positions C46–C49 match the CXXC motif. 4 disulfides stabilise this stretch: C46–C49, C155–C169, C163–C181, and C183–C192. One can recognise an EGF-like 1 domain in the interval L153–G193. An N-linked (GlcNAc...) asparagine glycan is attached at N205. 2 FU repeats span residues H208–S255 and S268–P315. Positions C278–C281 match the CXXC motif. 4 cysteine pairs are disulfide-bonded: C278–C281, C309–C321, C314–C330, and C332–C343. The 40-residue stretch at D305–V344 folds into the EGF-like 2; calcium-binding domain. The chain crosses the membrane as a helical span at residues L363–A383. A topological domain (cytoplasmic) is located at residue K384. Residues G385 to L405 form a helical membrane-spanning segment. The Extracellular portion of the chain corresponds to S406–R420.

Belongs to the CRELD family.

Its subcellular location is the membrane. The enzyme catalyses Catalyzes the rearrangement of -S-S- bonds in proteins.. In terms of biological role, protein disulfide isomerase. Promotes the localization of acetylcholine receptors (AChRs) to the plasma membrane. This Bos taurus (Bovine) protein is Protein disulfide isomerase CRELD1 (CRELD1).